Consider the following 217-residue polypeptide: Phosphatidylserine decarboxylase proenzyme (217 aa).

Ser-183 acts as the Schiff-base intermediate with substrate; via pyruvic acid in catalysis. The residue at position 183 (Ser-183) is a Pyruvic acid (Ser); by autocatalysis.

This sequence belongs to the phosphatidylserine decarboxylase family. PSD-A subfamily. In terms of assembly, heterodimer of a large membrane-associated beta subunit and a small pyruvoyl-containing alpha subunit. The cofactor is pyruvate. Post-translationally, is synthesized initially as an inactive proenzyme. Formation of the active enzyme involves a self-maturation process in which the active site pyruvoyl group is generated from an internal serine residue via an autocatalytic post-translational modification. Two non-identical subunits are generated from the proenzyme in this reaction, and the pyruvate is formed at the N-terminus of the alpha chain, which is derived from the carboxyl end of the proenzyme. The post-translation cleavage follows an unusual pathway, termed non-hydrolytic serinolysis, in which the side chain hydroxyl group of the serine supplies its oxygen atom to form the C-terminus of the beta chain, while the remainder of the serine residue undergoes an oxidative deamination to produce ammonia and the pyruvoyl prosthetic group on the alpha chain.

Its subcellular location is the cell membrane. The enzyme catalyses a 1,2-diacyl-sn-glycero-3-phospho-L-serine + H(+) = a 1,2-diacyl-sn-glycero-3-phosphoethanolamine + CO2. The protein operates within phospholipid metabolism; phosphatidylethanolamine biosynthesis; phosphatidylethanolamine from CDP-diacylglycerol: step 2/2. Its function is as follows. Catalyzes the formation of phosphatidylethanolamine (PtdEtn) from phosphatidylserine (PtdSer). This chain is Phosphatidylserine decarboxylase proenzyme, found in Cupriavidus metallidurans (strain ATCC 43123 / DSM 2839 / NBRC 102507 / CH34) (Ralstonia metallidurans).